Reading from the N-terminus, the 212-residue chain is Small ribosomal subunit protein eS1 (212 aa).

Belongs to the eukaryotic ribosomal protein eS1 family.

This Haloquadratum walsbyi (strain DSM 16790 / HBSQ001) protein is Small ribosomal subunit protein eS1.